The following is a 252-amino-acid chain: Thiazole synthase (252 aa).

The active-site Schiff-base intermediate with DXP is the K98. Residues G159, A185–G186, and A207–T208 contribute to the 1-deoxy-D-xylulose 5-phosphate site.

The protein belongs to the ThiG family. As to quaternary structure, homotetramer. Forms heterodimers with either ThiH or ThiS.

The protein localises to the cytoplasm. The catalysed reaction is [ThiS sulfur-carrier protein]-C-terminal-Gly-aminoethanethioate + 2-iminoacetate + 1-deoxy-D-xylulose 5-phosphate = [ThiS sulfur-carrier protein]-C-terminal Gly-Gly + 2-[(2R,5Z)-2-carboxy-4-methylthiazol-5(2H)-ylidene]ethyl phosphate + 2 H2O + H(+). The protein operates within cofactor biosynthesis; thiamine diphosphate biosynthesis. Catalyzes the rearrangement of 1-deoxy-D-xylulose 5-phosphate (DXP) to produce the thiazole phosphate moiety of thiamine. Sulfur is provided by the thiocarboxylate moiety of the carrier protein ThiS. In vitro, sulfur can be provided by H(2)S. The chain is Thiazole synthase from Mycobacterium avium (strain 104).